We begin with the raw amino-acid sequence, 456 residues long: Transforming growth factor beta-1-induced transcript 1 protein (456 aa).

M1 carries the N-acetylmethionine modification. The segment at 1–79 (MEDLDALLSD…ATPPFSSSCG (79 aa)) is disordered. Positions 1-195 (MEDLDALLSD…DTPSPPGPTS (195 aa)) are transcription activation. An interaction with PTK2B/PYK2 region spans residues 1–235 (MEDLDALLSD…CNKPIAGQVV (235 aa)). The LD motif 1 signature appears at 3-15 (DLDALLSDLETTT). Phosphothreonine is present on T33. Y55 carries the phosphotyrosine modification. Position 63 is a phosphoserine (S63). Positions 78–131 (CGVLGTGLCELDRLLQELNATQFNITDEIMSQFPSSKETAGEQKEDQSEDKKRP) are interaction with PTK2/FAK1. An LD motif 2 motif is present at residues 87–99 (ELDRLLQELNATQ). The segment at 109 to 146 (QFPSSKETAGEQKEDQSEDKKRPSPPPSPSPVLPKPSA) is disordered. Basic and acidic residues predominate over residues 116-130 (TAGEQKEDQSEDKKR). 6 positions are modified to phosphoserine: S132, S136, S138, S159, S181, and S189. Pro residues predominate over residues 132 to 142 (SPPPSPSPVLP). The LD motif 3 signature appears at 152-163 (ELDRLMASLSDF). The segment at 166–200 (QNHLPASGPTPPPVPSSMSEDTPSPPGPTSKGSLD) is disordered. The short motif at 198 to 210 (SLDTMLGLLQSDL) is the LD motif 4 element. 4 LIM zinc-binding domains span residues 221–280 (GLCG…RFSP), 281–338 (RCGL…QLFA), 339–398 (PRCQ…RRGS), and 399–456 (LCAT…KLFG). Position 398 is a phosphoserine (S398). Residue T402 is modified to Phosphothreonine.

The protein belongs to the paxillin family. Homooligomer. Interacts with CRIP2, HSPB1, ILK, LIMS1, LIMS2, NCK2, NUDT16L1, PAK, PPARG, PTPN12, TCF3, TCF7L2 and VCL. Forms a complex with GIT1 and ARHGEF7. Interacts with AR/androgen receptor in a ligand-dependent manner. Interacts with CSK, LYN, MAPK15, NR3C1, PPARG, PTK2/FAK1, PTK2B/PYK2, SLC6A3, SLC6A4, SMAD3, SRC and talin. Interacts (via LIM zinc-binding domain 2) with CBLC (via RING-type zinc finger); the interaction is direct and enhances CBLC E3 ubiquitin-protein ligase activity. Post-translationally, phosphorylated by gonadotropin-releasing hormone-activated SRC.

It is found in the cell junction. The protein resides in the focal adhesion. It localises to the nucleus matrix. The protein localises to the cytoplasm. Its subcellular location is the cytoskeleton. In terms of biological role, functions as a molecular adapter coordinating multiple protein-protein interactions at the focal adhesion complex and in the nucleus. Links various intracellular signaling modules to plasma membrane receptors and regulates the Wnt and TGFB signaling pathways. May also regulate SLC6A3 and SLC6A4 targeting to the plasma membrane hence regulating their activity. In the nucleus, functions as a nuclear receptor coactivator regulating glucocorticoid, androgen, mineralocorticoid and progesterone receptor transcriptional activity. May play a role in the processes of cell growth, proliferation, migration, differentiation and senescence. May have a zinc-dependent DNA-binding activity. This chain is Transforming growth factor beta-1-induced transcript 1 protein (TGFB1I1), found in Bos taurus (Bovine).